Here is a 680-residue protein sequence, read N- to C-terminus: DNA ligase (680 aa).

Residues 38-42, 87-88, and Glu119 contribute to the NAD(+) site; these read DAEYD and SL. The active-site N6-AMP-lysine intermediate is Lys121. 4 residues coordinate NAD(+): Arg142, Glu179, Lys296, and Lys320. Residues Cys414, Cys417, Cys432, and Cys438 each coordinate Zn(2+). Residues 597–680 enclose the BRCT domain; that stretch reads IEDLPLKGLT…DLLRKHGRLE (84 aa).

It belongs to the NAD-dependent DNA ligase family. LigA subfamily. The cofactor is Mg(2+). Requires Mn(2+) as cofactor.

It catalyses the reaction NAD(+) + (deoxyribonucleotide)n-3'-hydroxyl + 5'-phospho-(deoxyribonucleotide)m = (deoxyribonucleotide)n+m + AMP + beta-nicotinamide D-nucleotide.. Functionally, DNA ligase that catalyzes the formation of phosphodiester linkages between 5'-phosphoryl and 3'-hydroxyl groups in double-stranded DNA using NAD as a coenzyme and as the energy source for the reaction. It is essential for DNA replication and repair of damaged DNA. This chain is DNA ligase, found in Cellvibrio japonicus (strain Ueda107) (Pseudomonas fluorescens subsp. cellulosa).